A 297-amino-acid chain; its full sequence is Ubiquinone biosynthesis protein COQ4, mitochondrial (297 aa).

The N-terminal 54 residues, 1-54, are a transit peptide targeting the mitochondrion; the sequence is MLSSARARLPISLCSFSLPFARLPNTLSRYQETWQRLPGRTHPTRSIRTTPAYE. Zn(2+)-binding residues include His178, Asp179, His182, and Glu194.

The protein belongs to the COQ4 family. As to quaternary structure, component of a multi-subunit COQ enzyme complex, composed of at least COQ3, COQ4, COQ5, COQ6, COQ7 and COQ9. Zn(2+) serves as cofactor.

The protein localises to the mitochondrion inner membrane. The enzyme catalyses a 4-hydroxy-3-methoxy-5-(all-trans-polyprenyl)benzoate + H(+) = a 2-methoxy-6-(all-trans-polyprenyl)phenol + CO2. It functions in the pathway cofactor biosynthesis; ubiquinone biosynthesis. Functionally, lyase that catalyzes the C1-decarboxylation of 4-hydroxy-3-methoxy-5-(all-trans-polyprenyl)benzoic acid into 2-methoxy-6-(all-trans-polyprenyl)phenol during ubiquinone biosynthesis. The protein is Ubiquinone biosynthesis protein COQ4, mitochondrial of Laccaria bicolor (strain S238N-H82 / ATCC MYA-4686) (Bicoloured deceiver).